Reading from the N-terminus, the 57-residue chain is UPF0057 membrane protein T23F2.5 (57 aa).

The next 2 membrane-spanning stretches (helical) occupy residues L3 to W23 and I36 to A56.

The protein belongs to the UPF0057 (PMP3) family.

Its subcellular location is the membrane. The protein is UPF0057 membrane protein T23F2.5 of Caenorhabditis elegans.